A 357-amino-acid chain; its full sequence is MKLTTNYNDNNYDIFVEYNVLNKDYDFNYYDKRIALIDESVYRLHQQKIDLFLNKHSIFKLLIPGGEQVKTMHHYSTVVEKLLSMHVTRHSCLFAIGGGATGDFTGFVAATLLRGIHFIQVPTTILAHDASIGGKTGINASSGKNLIGAFKRPDMVLYDLDFLETLSQIEKLSGFAEIIKHVLLNANGHISKSETVLEIMHDVKDEVCLSELHAIDKWITFGIQTKMKVVHDDEFESGVRKFLNFGHTFGHAIEFHHKLPHGIAVMHGMIYALLLSDVTESDIMSLMRWMHRLGLKKLVYDNFDIYYELMRQDKKNEANEINFVLYYENNGYKVEQVDVKRLRKAFERLRKLEGELL.

Residues 99–103 (GATGD), 123–124 (TT), Lys-135, Lys-144, and 162–165 (FLET) contribute to the NAD(+) site. Glu-177, His-247, and His-261 together coordinate Zn(2+).

It belongs to the sugar phosphate cyclases superfamily. Dehydroquinate synthase family. Co(2+) is required as a cofactor. The cofactor is Zn(2+). Requires NAD(+) as cofactor.

The protein resides in the cytoplasm. The catalysed reaction is 7-phospho-2-dehydro-3-deoxy-D-arabino-heptonate = 3-dehydroquinate + phosphate. The protein operates within metabolic intermediate biosynthesis; chorismate biosynthesis; chorismate from D-erythrose 4-phosphate and phosphoenolpyruvate: step 2/7. Its function is as follows. Catalyzes the conversion of 3-deoxy-D-arabino-heptulosonate 7-phosphate (DAHP) to dehydroquinate (DHQ). The protein is 3-dehydroquinate synthase of Macrococcus caseolyticus (strain JCSC5402) (Macrococcoides caseolyticum).